The following is an 88-amino-acid chain: Sec-independent protein translocase protein TatA (88 aa).

The chain crosses the membrane as a helical span at residues 3-23; that stretch reads IFGVGLPEVTVILILALLIFG. A compositionally biased stretch (basic and acidic residues) spans 56 to 66; sequence MKEEDKDESPK. Residues 56-88 form a disordered region; it reads MKEEDKDESPKSIESNQSNEINQEKIDSENSNN. A compositionally biased stretch (polar residues) spans 67-76; it reads SIESNQSNEI. The span at 77–88 shows a compositional bias: basic and acidic residues; it reads NQEKIDSENSNN.

The protein belongs to the TatA/E family. As to quaternary structure, forms a complex with TatC.

It localises to the cell inner membrane. Part of the twin-arginine translocation (Tat) system that transports large folded proteins containing a characteristic twin-arginine motif in their signal peptide across membranes. TatA could form the protein-conducting channel of the Tat system. The chain is Sec-independent protein translocase protein TatA from Prochlorococcus marinus (strain MIT 9301).